The following is a 240-amino-acid chain: Terpene cyclase cdmG (240 aa).

The next 6 helical transmembrane spans lie at 16–36 (YASI…LNYG), 48–68 (YGMA…YTVI), 78–98 (IIMT…IKFA), 112–132 (IPFI…ALAA), 134–154 (VGPG…LTIG), and 167–187 (GVSY…VICV). Asn-197 carries N-linked (GlcNAc...) asparagine glycosylation. The helical transmembrane segment at 205 to 225 (IMKCFSGISLAVEIVYGVTLW) threads the bilayer.

Belongs to the paxB family.

The protein localises to the membrane. It carries out the reaction verruculide C epoxide = 3-hydroxypentacecilide A. It participates in secondary metabolite biosynthesis; terpenoid biosynthesis. Its function is as follows. Terpene cyclase; part of the gene cluster that mediates the biosynthesis of chrodrimanin B, a meroterpenoid that acts as a potent blocker of insect GABA-gated chloride channels. The first step of the pathway is the biosynthesis of 6-hydroxymellein by the polyketide synthase cdmE. The prenyltransferase cdmH acts as a 6-hydroxymellein 5-farnesyltransferase and produces the hydrophobic metabolite verruculide C. The FAD-dependent monooxygenase cdmI further converts verruculide C into verruculide B. The terpene cyclase cdmG then produced the pentacyclic molecule 3-hydroxypentacecilide A, the backbone structure of chrodrimanin B, via folding the farnesyl moiety of the substrate into the chair-boat conformation. The short-chain dehydrogenase/reductase cdmF functions as the 3-OH dehydrogenase that oxidizes the C-3 hydroxyl group of 3-hydroxypentacecilide A and produces chrodrimanin C, the dehydrogenated product of 3-hydroxypentacecilide A. The cytochrome P450 monooxygenase cdmJ then accepts both 3-hydroxypentacecilide A and chrodrimanin C and functions as a C-7-beta-hydroxylase to produce respectively chrodrimanin H and chrodrimanin F. The dioxygenase cdmA accepts chrodrimanin H to afford chrodrimanin E, which is further transformed to chrodrimanin A by the dioxygenase cdmD. CdmA can also accept chrodrimanin C as substrate to convert it into verruculide A, which is further converted into chrodrimanin T by cdmD. The last step of the biosynthesis is proposed to be performed by the acetyltransferase cdmC which acetylates chrodrimanin A to yield chrodrimanin B. The pathway may also lead to the production of additional shunt products, including chrodrimanins T and U. This Talaromyces verruculosus (Penicillium verruculosum) protein is Terpene cyclase cdmG.